The following is a 331-amino-acid chain: GTP 3',8-cyclase (331 aa).

One can recognise a Radical SAM core domain in the interval 9 to 233 (SFGRQVTYVR…TATNEHTGGP (225 aa)). Residue arginine 18 participates in GTP binding. 2 residues coordinate [4Fe-4S] cluster: cysteine 25 and cysteine 29. An S-adenosyl-L-methionine-binding site is contributed by tyrosine 31. [4Fe-4S] cluster is bound at residue cysteine 32. Residue arginine 67 coordinates GTP. Glycine 71 lines the S-adenosyl-L-methionine pocket. Position 98 (threonine 98) interacts with GTP. Serine 122 serves as a coordination point for S-adenosyl-L-methionine. Lysine 159 is a GTP binding site. Methionine 193 contacts S-adenosyl-L-methionine. Residues cysteine 257 and cysteine 260 each contribute to the [4Fe-4S] cluster site. Position 262 to 264 (262 to 264 (RVR)) interacts with GTP. Cysteine 274 lines the [4Fe-4S] cluster pocket.

Belongs to the radical SAM superfamily. MoaA family. In terms of assembly, monomer and homodimer. The cofactor is [4Fe-4S] cluster.

It catalyses the reaction GTP + AH2 + S-adenosyl-L-methionine = (8S)-3',8-cyclo-7,8-dihydroguanosine 5'-triphosphate + 5'-deoxyadenosine + L-methionine + A + H(+). The protein operates within cofactor biosynthesis; molybdopterin biosynthesis. Its function is as follows. Catalyzes the cyclization of GTP to (8S)-3',8-cyclo-7,8-dihydroguanosine 5'-triphosphate. In Saccharophagus degradans (strain 2-40 / ATCC 43961 / DSM 17024), this protein is GTP 3',8-cyclase.